A 262-amino-acid chain; its full sequence is Cyclin-dependent kinase inhibitor 1 (262 aa).

A disordered region spans residues 140 to 212 (SDVAEAGSEH…SAQQATRPKI (73 aa)). Basic and acidic residues predominate over residues 160–169 (SGRDRERRET). A compositionally biased stretch (low complexity) spans 198-208 (SAATASAQQAT).

The protein belongs to the CDI family. ICK/KRP subfamily.

The protein is Cyclin-dependent kinase inhibitor 1 (KRP1) of Oryza sativa subsp. indica (Rice).